Reading from the N-terminus, the 105-residue chain is Nitrogenase-stabilizing/protective protein NifW 2 (105 aa).

Belongs to the NifW family.

Functionally, may protect the nitrogenase Fe-Mo protein from oxidative damage. The chain is Nitrogenase-stabilizing/protective protein NifW 2 (nifW2) from Trichormus variabilis (strain ATCC 29413 / PCC 7937) (Anabaena variabilis).